A 369-amino-acid polypeptide reads, in one-letter code: Zeaxanthin 7,8(7',8')-cleavage dioxygenase, chromoplastic (369 aa).

The Fe cation site is built by histidine 62, histidine 112, histidine 177, and histidine 356.

The protein belongs to the carotenoid oxygenase family. The cofactor is Fe(2+). In the style branches.

The protein localises to the plastid. Its subcellular location is the chromoplast. The enzyme catalyses all-trans-zeaxanthin + 2 O2 = crocetin dialdehyde + 2 3beta-hydroxy-beta-cyclocitral. Cleaves zeaxanthin symmetrically at the 7-8 and 7'-8' double bonds to produce crocetin dialdehyde and hydroxy-beta-cyclocitral, two water-soluble precursors sequestred in vacuoles and involved in the synthesis of saffron pigment and aroma. The chain is Zeaxanthin 7,8(7',8')-cleavage dioxygenase, chromoplastic (ZCD) from Crocus sativus (Saffron).